The sequence spans 242 residues: Octanoyltransferase (242 aa).

In terms of domain architecture, BPL/LPL catalytic spans 31 to 206 (SQTTDEIWFL…LFLKNFGYNQ (176 aa)). Substrate-binding positions include 70–77 (RGGQVTYH), 137–139 (SIG), and 150–152 (GLA). C168 functions as the Acyl-thioester intermediate in the catalytic mechanism.

Belongs to the LipB family.

The protein resides in the cytoplasm. The catalysed reaction is octanoyl-[ACP] + L-lysyl-[protein] = N(6)-octanoyl-L-lysyl-[protein] + holo-[ACP] + H(+). The protein operates within protein modification; protein lipoylation via endogenous pathway; protein N(6)-(lipoyl)lysine from octanoyl-[acyl-carrier-protein]: step 1/2. Catalyzes the transfer of endogenously produced octanoic acid from octanoyl-acyl-carrier-protein onto the lipoyl domains of lipoate-dependent enzymes. Lipoyl-ACP can also act as a substrate although octanoyl-ACP is likely to be the physiological substrate. The protein is Octanoyltransferase of Coxiella burnetii (strain CbuG_Q212) (Coxiella burnetii (strain Q212)).